The chain runs to 320 residues: NAD kinase (320 aa).

Aspartate 96 acts as the Proton acceptor in catalysis. Residues 96 to 97 (DG), arginine 101, 170 to 171 (NE), aspartate 200, and 211 to 216 (TAYAFS) each bind NAD(+).

It belongs to the NAD kinase family. A divalent metal cation serves as cofactor.

The protein localises to the cytoplasm. The enzyme catalyses NAD(+) + ATP = ADP + NADP(+) + H(+). Its function is as follows. Involved in the regulation of the intracellular balance of NAD and NADP, and is a key enzyme in the biosynthesis of NADP. Catalyzes specifically the phosphorylation on 2'-hydroxyl of the adenosine moiety of NAD to yield NADP. The sequence is that of NAD kinase from Rhodococcus jostii (strain RHA1).